The chain runs to 82 residues: Acyl carrier protein (82 aa).

The Carrier domain occupies 2-77 (DNVADRVKKV…QAIDYVSAHI (76 aa)). S37 is modified (O-(pantetheine 4'-phosphoryl)serine).

Belongs to the acyl carrier protein (ACP) family. 4'-phosphopantetheine is transferred from CoA to a specific serine of apo-ACP by AcpS. This modification is essential for activity because fatty acids are bound in thioester linkage to the sulfhydryl of the prosthetic group.

Its subcellular location is the cytoplasm. The protein operates within lipid metabolism; fatty acid biosynthesis. In terms of biological role, carrier of the growing fatty acid chain in fatty acid biosynthesis. In Acidithiobacillus ferrooxidans (strain ATCC 23270 / DSM 14882 / CIP 104768 / NCIMB 8455) (Ferrobacillus ferrooxidans (strain ATCC 23270)), this protein is Acyl carrier protein.